The primary structure comprises 184 residues: ATP synthase subunit delta (184 aa).

It belongs to the ATPase delta chain family. F-type ATPases have 2 components, F(1) - the catalytic core - and F(0) - the membrane proton channel. F(1) has five subunits: alpha(3), beta(3), gamma(1), delta(1), epsilon(1). F(0) has three main subunits: a(1), b(2) and c(10-14). The alpha and beta chains form an alternating ring which encloses part of the gamma chain. F(1) is attached to F(0) by a central stalk formed by the gamma and epsilon chains, while a peripheral stalk is formed by the delta and b chains.

It localises to the cell inner membrane. Functionally, f(1)F(0) ATP synthase produces ATP from ADP in the presence of a proton or sodium gradient. F-type ATPases consist of two structural domains, F(1) containing the extramembraneous catalytic core and F(0) containing the membrane proton channel, linked together by a central stalk and a peripheral stalk. During catalysis, ATP synthesis in the catalytic domain of F(1) is coupled via a rotary mechanism of the central stalk subunits to proton translocation. This protein is part of the stalk that links CF(0) to CF(1). It either transmits conformational changes from CF(0) to CF(1) or is implicated in proton conduction. This chain is ATP synthase subunit delta, found in Rickettsia conorii (strain ATCC VR-613 / Malish 7).